The chain runs to 243 residues: Probable enoyl-CoA hydratase echA6 (243 aa).

The protein belongs to the enoyl-CoA hydratase/isomerase family.

The catalysed reaction is a (3S)-3-hydroxyacyl-CoA = a (2E)-enoyl-CoA + H2O. The enzyme catalyses a 4-saturated-(3S)-3-hydroxyacyl-CoA = a (3E)-enoyl-CoA + H2O. In terms of biological role, could possibly oxidize fatty acids using specific components. This is Probable enoyl-CoA hydratase echA6 (echA6) from Mycobacterium bovis (strain ATCC BAA-935 / AF2122/97).